Here is a 629-residue protein sequence, read N- to C-terminus: Long-chain-fatty-acid--AMP ligase FadD32 (629 aa).

ATP contacts are provided by residues 186-191, Ser-341, Ala-345, Asp-468, and Arg-482; that span reads TSGSTR.

This sequence belongs to the ATP-dependent AMP-binding enzyme family. As to quaternary structure, monomer.

The enzyme catalyses a long-chain fatty acid + holo-[ACP] + ATP = a long-chain fatty acyl-[ACP] + AMP + diphosphate. The catalysed reaction is dodecanoate + ATP + H(+) = dodecanoyl-AMP + diphosphate. It carries out the reaction tetradecanoate + ATP + H(+) = tetradecanoyl-AMP + diphosphate. Its pathway is lipid metabolism; mycolic acid biosynthesis. With respect to regulation, the acyl-AMP ligase activity is inhibited by the alkylphosphate esters of AMP, adenosine 50-dodecylphosphate (AMPC12) and eicosyl-AMP (AMPC20). Involved in the biosynthesis of mycolic acids. Catalyzes the activation of long-chain fatty acids as acyl-adenylates (acyl-AMP), which are then transferred to the phosphopantetheine arm of the polyketide synthase Pks13 for further chain extension. Can use dodecanoate (C12) and tetradecanoate (C14). The sequence is that of Long-chain-fatty-acid--AMP ligase FadD32 (fadD32) from Mycobacterium marinum (strain ATCC BAA-535 / M).